The following is a 539-amino-acid chain: MEKEVATDPLPQEIPSDAPDEGGSLSRPAANTWTVVSLTIALCLGVFCMSLDVTIITTAIPRITDQFDSLDDIGWYGSSYLLTNCATTLAFGKFYTFYSTKWVYLSALFLFEVGSLVCGVTPTSVGLILGRCIAGLGAGGLFSGSLLIIAQTVPLHRRPVFTALLGSMYGIASVAGPPLGGALTDRVSWRWCFYINLPIGAVTAAFVLFFFHAPNSVKRRPELRKLLSELDPIGSFFFLPAIVCLLLALQWGGTQYSWKSPRIIVLFVLTGVLLLAFVAVQIRQNEKATLPPRIVQNRNIWSSAWFAITLNGAYFVFIYYLPIWFQAIKAASATKSGVMNLPSIIAVVVVSIISGMLVTIFGYYNPVMIMSSVTLSIGAGLLSTLKTDSGSGEWIGYQILMGLGVGLGMQQPFMVVQNVLPDGDVPTGTAVITFAQTLGGAIFISVGQNIFQNQFAHTMHLEDPSVNVATVLSAGTTTLRKYLPAEQLPAVLRSYNTAITQAFYVGVALASLSCIGTIALEWKSVKKPRNTTPNDHSGS.

Positions 1–25 (MEKEVATDPLPQEIPSDAPDEGGSL) are disordered. Transmembrane regions (helical) follow at residues 36-56 (VSLT…VTII), 108-128 (LFLF…VGLI), 133-153 (IAGL…AQTV), 160-180 (VFTA…PPLG), 191-211 (WCFY…LFFF), 233-253 (IGSF…QWGG), 262-282 (RIIV…AVQI), 305-325 (WFAI…PIWF), 338-360 (VMNL…LVTI), 362-384 (GYYN…LLST), 395-415 (IGYQ…PFMV), and 502-522 (AFYV…ALEW).

It belongs to the major facilitator superfamily. TCR/Tet family.

Its subcellular location is the membrane. Its function is as follows. Efflux pump; part of the gene cluster that mediates the biosynthesis of the mycotoxins roquefortine C and meleagrin. The polypeptide is Efflux pump roqT (Penicillium rubens (strain ATCC 28089 / DSM 1075 / NRRL 1951 / Wisconsin 54-1255) (Penicillium chrysogenum)).